The chain runs to 304 residues: Glycine--tRNA ligase alpha subunit (304 aa).

This sequence belongs to the class-II aminoacyl-tRNA synthetase family. In terms of assembly, tetramer of two alpha and two beta subunits.

The protein resides in the cytoplasm. It carries out the reaction tRNA(Gly) + glycine + ATP = glycyl-tRNA(Gly) + AMP + diphosphate. The sequence is that of Glycine--tRNA ligase alpha subunit from Actinobacillus pleuropneumoniae serotype 3 (strain JL03).